Reading from the N-terminus, the 491-residue chain is Large ribosomal subunit protein mL101 (rPPR4) (491 aa).

PPR repeat units follow at residues 122–156 (TELT…NITP), 157–191 (SSMS…NVMP), 192–226 (DSYT…GRVA), 228–262 (DWTT…NTQR), 263–293 (DFTA…LRLA), 298–328 (SNVA…WQAN), 333–367 (DIRI…GGKL), and 368–402 (NAKT…GKGD).

Belongs to the PPR family. P subfamily. As to quaternary structure, component of the mitochondrial ribosome large subunit.

It localises to the mitochondrion. This is Large ribosomal subunit protein mL101 (rPPR4) from Arabidopsis thaliana (Mouse-ear cress).